Here is a 68-residue protein sequence, read N- to C-terminus: MRTSYLLLFTLCLLLSEMASGGNFLTGLGHRSDHYNCVSSGGQCLYSACPIFTKIQGTCYGGKAKCCK.

The signal sequence occupies residues Met-1–Gly-21. Positions Gly-22–Ser-32 are excised as a propeptide. Disulfide bonds link Cys-37–Cys-66, Cys-44–Cys-59, and Cys-49–Cys-67.

This sequence belongs to the beta-defensin family. As to quaternary structure, monomer. Homodimer.

The protein resides in the secreted. It is found in the membrane. Functionally, has bactericidal activity. May act as a ligand for C-C chemokine receptor CCR6. Positively regulates the sperm motility and bactericidal activity in a CCR6-dependent manner. Binds to CCR6 and triggers Ca2+ mobilization in the sperm which is important for its motility. In Pan troglodytes (Chimpanzee), this protein is Beta-defensin 1 (DEFB1).